The sequence spans 333 residues: Low specificity L-threonine aldolase (333 aa).

Lys-197 carries the N6-(pyridoxal phosphate)lysine modification.

It belongs to the threonine aldolase family. In terms of assembly, homotetramer. Requires pyridoxal 5'-phosphate as cofactor.

It carries out the reaction L-threonine = acetaldehyde + glycine. The enzyme catalyses L-allo-threonine = acetaldehyde + glycine. Functionally, catalyzes the cleavage of L-allo-threonine and L-threonine to glycine and acetaldehyde. L-threo-phenylserine and L-erythro-phenylserine are also good substrates. This is Low specificity L-threonine aldolase (ltaE) from Escherichia coli (strain K12).